The chain runs to 229 residues: Synaptogyrin-3 (229 aa).

The residue at position 1 (Met1) is an N-acetylmethionine. The MARVEL domain occupies 20–172; that stretch reads FARRPQTLLR…LTVKALQRFR (153 aa). Transmembrane regions (helical) follow at residues 30–50, 70–90, 105–125, and 148–168; these read VVSW…GYVN, FGVV…LLDV, VLLD…GFCF, and AAIA…VKAL. Positions 209-223 are enriched in polar residues; that stretch reads QSPPFTETLDTSSKG. The interval 209 to 229 is disordered; the sequence is QSPPFTETLDTSSKGYQVPAY.

The protein belongs to the synaptogyrin family. Interacts (via N-terminus) with SLC6A3 (via N-terminus). May interact with VMAT2. In terms of tissue distribution, specifically expressed in brain. Found in the brain across the dorsal and ventral corpus striatum as well as in the cortex.

Its subcellular location is the cytoplasmic vesicle. The protein resides in the secretory vesicle. The protein localises to the synaptic vesicle membrane. It localises to the synapse. Its function is as follows. May play a role in regulated exocytosis. May indirectly regulate the activity of the plasma membrane dopamine transporter SLC6A3 and thereby regulate dopamine transport back from the synaptic cleft into the presynaptic terminal. The chain is Synaptogyrin-3 from Mus musculus (Mouse).